The primary structure comprises 88 residues: Small ribosomal subunit protein bS20 (88 aa).

This sequence belongs to the bacterial ribosomal protein bS20 family.

Binds directly to 16S ribosomal RNA. The protein is Small ribosomal subunit protein bS20 of Syntrophomonas wolfei subsp. wolfei (strain DSM 2245B / Goettingen).